The chain runs to 312 residues: Pre-mRNA-splicing factor 38A (312 aa).

The N-terminal protein interaction domain stretch occupies residues 1 to 179 (MANRTVKDAH…VLEETEQLDP (179 aa)). The tract at residues 180–312 (RVSALEEDMD…SHKKSRRGNE (133 aa)) is disordered. The segment covering 184–201 (LEEDMDDVESSEEEEDED) has biased composition (acidic residues). The segment covering 202–223 (EKGRDPSPEHHRRNYRDLDRPR) has biased composition (basic and acidic residues). Composition is skewed to basic residues over residues 224-294 (RSPS…RSHS) and 301-312 (KKSHKKSRRGNE).

This sequence belongs to the PRP38 family. In terms of assembly, component of the spliceosome B complex.

Its subcellular location is the nucleus. In terms of biological role, involved in pre-mRNA splicing as a component of the spliceosome. This is Pre-mRNA-splicing factor 38A (prpf38a) from Xenopus tropicalis (Western clawed frog).